The sequence spans 553 residues: Dihydroxy-acid dehydratase (553 aa).

Asp78 provides a ligand contact to Mg(2+). Cys119 serves as a coordination point for [2Fe-2S] cluster. Mg(2+)-binding residues include Asp120 and Lys121. An N6-carboxylysine modification is found at Lys121. Cys193 is a binding site for [2Fe-2S] cluster. Mg(2+) is bound at residue Glu441. Residue Ser467 is the Proton acceptor of the active site.

It belongs to the IlvD/Edd family. As to quaternary structure, homodimer. It depends on [2Fe-2S] cluster as a cofactor. Requires Mg(2+) as cofactor.

The enzyme catalyses (2R)-2,3-dihydroxy-3-methylbutanoate = 3-methyl-2-oxobutanoate + H2O. It catalyses the reaction (2R,3R)-2,3-dihydroxy-3-methylpentanoate = (S)-3-methyl-2-oxopentanoate + H2O. It participates in amino-acid biosynthesis; L-isoleucine biosynthesis; L-isoleucine from 2-oxobutanoate: step 3/4. Its pathway is amino-acid biosynthesis; L-valine biosynthesis; L-valine from pyruvate: step 3/4. Functions in the biosynthesis of branched-chain amino acids. Catalyzes the dehydration of (2R,3R)-2,3-dihydroxy-3-methylpentanoate (2,3-dihydroxy-3-methylvalerate) into 2-oxo-3-methylpentanoate (2-oxo-3-methylvalerate) and of (2R)-2,3-dihydroxy-3-methylbutanoate (2,3-dihydroxyisovalerate) into 2-oxo-3-methylbutanoate (2-oxoisovalerate), the penultimate precursor to L-isoleucine and L-valine, respectively. This Geobacter sulfurreducens (strain ATCC 51573 / DSM 12127 / PCA) protein is Dihydroxy-acid dehydratase.